The primary structure comprises 546 residues: Sterol O-acyltransferase 1 (546 aa).

The residue at position 1 (M1) is an N-acetylmethionine. A disordered region spans residues 1-37; the sequence is MVGEEKMSLRNRLSKSGENPEQDEAQRSVSDTQSNGR. Over 1-134 the chain is Cytoplasmic; it reads MVGEEKMSLR…LDELFEVDHI (134 aa). Position 8 is a phosphoserine (S8). Residues 27-37 are compositionally biased toward polar residues; sequence RSVSDTQSNGR. Cholesterol is bound at residue H133. Residues 135 to 156 form a helical membrane-spanning segment; sequence RTIYHMFIGLLILFILSTLVVD. Residues 157–176 are Lumenal-facing; that stretch reads YIDEGRLVLEFNLLGYAFGK. Residues 177–202 traverse the membrane as a helical segment; the sequence is LPTVIWTWWAMFLSTLSIPYFLFQRW. The Cytoplasmic segment spans residues 203–214; sequence AHGYSKTSHPLI. The helical transmembrane segment at 215–240 threads the bilayer; the sequence is YSLSHGFFFLVFQLGILGFVPTYVVL. Over 241-248 the chain is Lumenal; the sequence is AYTLPPAS. Residues 249-272 form a helical membrane-spanning segment; the sequence is RFIVILEQIRMVMKAHSFVRENVP. Topologically, residues 273-315 are cytoplasmic; it reads RVLNAAKEKSSTVPVPTVNQYLYFLFAPTLIYRDSYPRTPTVR. Residues 316–348 form a helical membrane-spanning segment; that stretch reads WGYVAVQFLQVFGCLFYVYYIFERLCAPLFRNI. The Lumenal portion of the chain corresponds to 349–365; sequence KQEPFSARVLVLCVFNS. A helical membrane pass occupies residues 366-391; the sequence is ILPGVLMLFLTFFAFLHCWLNAFAEM. Over 392–439 the chain is Cytoplasmic; sequence LRFGDRMFYKDWWNSTSYSNYYRTWNVVVHDWLYYYAYKDLLWFFSKR. The FYXDWWN motif motif lies at 399 to 405; it reads FYKDWWN. An acyl-CoA is bound by residues N411, R414, N417, H421, Y429, K441, and S452. A helical membrane pass occupies residues 440–464; the sequence is FKSAAMLAVFALSAVVHEYALAVCL. Residue H456 is part of the active site. Topologically, residues 465 to 470 are lumenal; the sequence is SYFYPV. A helical transmembrane segment spans residues 471-486; that stretch reads LFVLFMFFGMAFNFIV. The Cytoplasmic portion of the chain corresponds to 487–492; sequence NDSRKR. The chain crosses the membrane as a helical span at residues 493 to 524; that stretch reads PIWNIMVWASLFLGHGVILCFYSQEWYARQHC. C524 and C542 are disulfide-bonded. Topologically, residues 525–546 are lumenal; that stretch reads PLKNPTFLDYVRPRSWTCQYVF.

This sequence belongs to the membrane-bound acyltransferase family. Sterol o-acyltransferase subfamily. In terms of assembly, may form homo- or heterodimers. Interacts with UBIAD1.

It is found in the endoplasmic reticulum membrane. It catalyses the reaction a sterol + a long-chain fatty acyl-CoA = a long-chain 3-hydroxysterol ester + CoA. The catalysed reaction is cholesterol + an acyl-CoA = a cholesterol ester + CoA. It carries out the reaction cholesterol + (9Z)-octadecenoyl-CoA = cholesteryl (9Z-octadecenoate) + CoA. The enzyme catalyses cholesterol + hexadecanoyl-CoA = cholesteryl hexadecanoate + CoA. It catalyses the reaction octadecanoyl-CoA + cholesterol = cholesteryl octadecanoate + CoA. The catalysed reaction is (9Z,12Z)-octadecadienoyl-CoA + cholesterol = cholesteryl (9Z,12Z)-octadecadienoate + CoA. It carries out the reaction (5Z,8Z,11Z,14Z)-eicosatetraenoyl-CoA + cholesterol = cholesteryl (5Z,8Z,11Z,14Z)-eicosatetraenoate + CoA. The enzyme catalyses (9Z)-hexadecenoyl-CoA + cholesterol = cholesteryl (9Z)-hexadecenoate + CoA. It catalyses the reaction (11Z)-octadecenoyl-CoA + cholesterol = cholesteryl (11Z)-octadecenoate + CoA. The catalysed reaction is (7Z)-octadecenoyl-CoA + cholesterol = cholesteryl (7Z)-octadecenoate + CoA. In terms of biological role, catalyzes the formation of fatty acid-cholesterol esters, which are less soluble in membranes than cholesterol. Plays a role in lipoprotein assembly and dietary cholesterol absorption. Preferentially utilizes oleoyl-CoA ((9Z)-octadecenoyl-CoA) as a substrate: shows a higher activity towards an acyl-CoA substrate with a double bond at the delta-9 position (9Z) than towards saturated acyl-CoA or an unsaturated acyl-CoA with a double bond at the delta-7 (7Z) or delta-11 (11Z) positions. In Cricetulus griseus (Chinese hamster), this protein is Sterol O-acyltransferase 1 (SOAT1).